Consider the following 243-residue polypeptide: Terpene cyclase ptmB (243 aa).

The next 3 helical transmembrane spans lie at 19–39, 48–68, and 78–98; these read IANLFVLGMGLGWLINYVGMI, YGMAIMPLCCNIAWEIVYSLI, and GVFIAGLTINIGVMYAAIKFA. An N-linked (GlcNAc...) asparagine glycan is attached at Asn111. 4 helical membrane passes run 112–132, 137–157, 172–194, and 205–225; these read LSLIFFLATLGFLTGHLALAA, SLAYSWGAVVCQLLLSVGGLC, LWLSRFLGSSCTVGFASLRWMYW, and LVLWSLALFLTVDGSYGICYW.

The protein belongs to the paxB family.

Its subcellular location is the membrane. Its pathway is secondary metabolite biosynthesis. Functionally, terpene cyclase; part of the gene cluster that mediates the biosynthesis of the indole diterpenes penitrems. The geranylgeranyl diphosphate (GGPP) synthase ptmG catalyzes the first step in penitrem biosynthesis via conversion of farnesyl pyrophosphate and isopentyl pyrophosphate into geranylgeranyl pyrophosphate (GGPP). Condensation of indole-3-glycerol phosphate with GGPP by the prenyl transferase ptmC then forms 3-geranylgeranylindole (3-GGI). Epoxidation by the FAD-dependent monooxygenase ptmM leads to a epoxidized-GGI that is substrate of the terpene cyclase ptmB for cyclization to yield paspaline. Paspaline is subsequently converted to 13-desoxypaxilline by the cytochrome P450 monooxygenase ptmP, the latter being then converted to paxilline by the cytochrome P450 monooxygenase ptmQ. Paxilline is converted to beta-paxitriol via C-10 ketoreduction by the short-chain dehydrogenase ptmH which can be monoprenylated at the C-20 by the indole diterpene prenyltransferase ptmD. A two-step elimination (acetylation and elimination) process performed by the O-acetyltransferase ptmV and ptmI leads to the production of the prenylated form of penijanthine. The FAD-linked oxidoreductase ptmO then converts the prenylated form of penijanthine into PC-M5 which is in turn transformed into PC-M4 by the aromatic dimethylallyltransferase ptmE. Five sequential oxidative transformations performed by the cytochrome P450 monooxygenases ptmK, ptmU, ptmL, ptmN and ptmJ yield the various penitrem compounds. PtmK, ptmU and ptmM are involved in the formation of the key bicyclic ring of penitrem C via the formation of the intermediates secopenitrem D and penitrem D. PtmL catalyzes the epoxidation of penitrem D and C to yield penitrem B and F, respectively. PtmJ catalyzes the last benzylic hydroxylation to convert penitrem B to prenitrem E and penitrem F to penitrem A. The sequence is that of Terpene cyclase ptmB from Penicillium ochrochloron.